Reading from the N-terminus, the 215-residue chain is Glutathione S-transferase D6 (215 aa).

Positions 1-80 constitute a GST N-terminal domain; it reads MDLYNMSGSP…YLVEQYGKDD (80 aa). Residues S9, 50–52, and 64–66 each bind glutathione; these read HTI and ETR. The GST C-terminal domain occupies 86–206; it reads DPQKQALINQ…LARIQSAKKF (121 aa).

It belongs to the GST superfamily. Delta family. As to quaternary structure, homodimer.

The enzyme catalyses RX + glutathione = an S-substituted glutathione + a halide anion + H(+). Functionally, conjugation of reduced glutathione to a wide number of exogenous and endogenous hydrophobic electrophiles. May be involved in detoxification. This is Glutathione S-transferase D6 from Drosophila melanogaster (Fruit fly).